Consider the following 200-residue polypeptide: Dephospho-CoA kinase (200 aa).

Residues 3–200 form the DPCK domain; it reads IFGLTGGIGS…LNVNNKCNMD (198 aa). 11–16 lines the ATP pocket; it reads GSGKSL.

The protein belongs to the CoaE family.

Its subcellular location is the cytoplasm. It carries out the reaction 3'-dephospho-CoA + ATP = ADP + CoA + H(+). It participates in cofactor biosynthesis; coenzyme A biosynthesis; CoA from (R)-pantothenate: step 5/5. Catalyzes the phosphorylation of the 3'-hydroxyl group of dephosphocoenzyme A to form coenzyme A. This chain is Dephospho-CoA kinase, found in Ehrlichia canis (strain Jake).